Here is a 192-residue protein sequence, read N- to C-terminus: Acetyltransferase PA3944 (192 aa).

An N-acetyltransferase domain is found at 18 to 187 (LLLRAWRDSD…RHILYRVDAA (170 aa)). Residues 105 to 107 (WRL), G113, N145, and 150 to 152 (GLM) contribute to the CoA site.

Its function is as follows. Catalyzes the transfer of an acetyl group from acetyl coenzyme A (AcCoA) to an acceptor substrate and releases both CoA and the acetylated product. It prefers the peptide Asp-Phe methyl ester (or aspartame) and the peptide antibiotics polymyxin B and colistin. Other substrates like dopamine, serotonin, puromycin, chloramphenicol, D-glucosamine, glycine and N-alpha-acetyl-L-glutamine are used and displayed lower activity. The polypeptide is Acetyltransferase PA3944 (Pseudomonas aeruginosa (strain ATCC 15692 / DSM 22644 / CIP 104116 / JCM 14847 / LMG 12228 / 1C / PRS 101 / PAO1)).